A 156-amino-acid polypeptide reads, in one-letter code: Small ribosomal subunit protein uS7 (156 aa).

The protein belongs to the universal ribosomal protein uS7 family. In terms of assembly, part of the 30S ribosomal subunit. Contacts proteins S9 and S11.

Functionally, one of the primary rRNA binding proteins, it binds directly to 16S rRNA where it nucleates assembly of the head domain of the 30S subunit. Is located at the subunit interface close to the decoding center, probably blocks exit of the E-site tRNA. This Tremblaya princeps protein is Small ribosomal subunit protein uS7.